We begin with the raw amino-acid sequence, 839 residues long: Periplasmic nitrate reductase (839 aa).

A signal peptide (tat-type signal) is located at residues 1–34 (MTLTRRDFIKANAAAAAATAAAVNLPLVPSMAQA). The 4Fe-4S Mo/W bis-MGD-type domain maps to 46–102 (IKWDKAACRFCGTGCSVLVGTKGGRVVATQGDPDAPVNRGLNCIKGYFLSKIMYGED). Positions 53, 56, 60, and 88 each coordinate [4Fe-4S] cluster. Mo-bis(molybdopterin guanine dinucleotide) is bound by residues Lys90, Gln157, Asn182, Cys186, 219-226 (WGSNMAEM), 250-254 (STYEH), 269-271 (QTD), Met379, Gln383, Asn489, 515-516 (SD), Lys538, Asp565, and 729-738 (TGRVLEHWHT). Substrate is bound at residue Phe805. Mo-bis(molybdopterin guanine dinucleotide) is bound by residues Asn813 and Lys830.

The protein belongs to the prokaryotic molybdopterin-containing oxidoreductase family. NasA/NapA/NarB subfamily. As to quaternary structure, component of the periplasmic nitrate reductase NapAB complex composed of NapA and NapB. [4Fe-4S] cluster is required as a cofactor. Mo-bis(molybdopterin guanine dinucleotide) serves as cofactor. Post-translationally, predicted to be exported by the Tat system. The position of the signal peptide cleavage has not been experimentally proven.

It is found in the periplasm. It catalyses the reaction 2 Fe(II)-[cytochrome] + nitrate + 2 H(+) = 2 Fe(III)-[cytochrome] + nitrite + H2O. In terms of biological role, catalytic subunit of the periplasmic nitrate reductase complex NapAB. Receives electrons from NapB and catalyzes the reduction of nitrate to nitrite. The polypeptide is Periplasmic nitrate reductase (Laribacter hongkongensis (strain HLHK9)).